The following is a 651-amino-acid chain: L-aspartate oxidase, chloroplastic (651 aa).

Residues 1–74 (MAAHVSTGNI…PISETSKPIR (74 aa)) constitute a chloroplast transit peptide. FAD contacts are provided by residues 92 to 95 (SGVA), Lys114, 121 to 128 (NTNYAQGG), and Asp292. Arg368 (proton donor/acceptor) is an active-site residue. FAD contacts are provided by residues Glu453 and 469-470 (SL).

The protein belongs to the FAD-dependent oxidoreductase 2 family. NadB subfamily. In terms of assembly, interacts in vitro with QS. The cofactor is FAD.

The protein localises to the plastid. The protein resides in the chloroplast. The catalysed reaction is L-aspartate + O2 = iminosuccinate + H2O2. Its pathway is cofactor biosynthesis; NAD(+) biosynthesis; iminoaspartate from L-aspartate (oxidase route): step 1/1. Its function is as follows. Catalyzes the oxidation of L-aspartate to iminoaspartate. Can complement nadB-deficient E.coli mutant. Plays a role in stomatal immunity. This Arabidopsis thaliana (Mouse-ear cress) protein is L-aspartate oxidase, chloroplastic.